Consider the following 364-residue polypeptide: Putative F-box/kelch-repeat protein At1g12170 (364 aa).

In terms of domain architecture, F-box spans M1–V50. Kelch repeat units follow at residues S156–N205 and C328–P364.

The polypeptide is Putative F-box/kelch-repeat protein At1g12170 (Arabidopsis thaliana (Mouse-ear cress)).